We begin with the raw amino-acid sequence, 156 residues long: Arginine repressor (156 aa).

It belongs to the ArgR family.

Its subcellular location is the cytoplasm. It participates in amino-acid biosynthesis; L-arginine biosynthesis [regulation]. In terms of biological role, regulates arginine biosynthesis genes. The protein is Arginine repressor of Shewanella halifaxensis (strain HAW-EB4).